The chain runs to 492 residues: MTVHFPFDNSYAALPDNFFARVAPTPVAAPRLIKLNRPLAERLGLDPDWLDSPEGAEILAGARLPEGAASIAMAYAGHQFGQFVPQLGDGRAILLGEVIDRDGVRRDIQLKGSGRTPFSRMGDGRAALGPVLREYIVSEAMAALGIPTTRSLAAVLTGERVVRDQIQPGAVLTRVASSHIRVGTFQFFAARGDREAVRALADHVIARHYPEAAQADAPYLALLEGVIARQADLIARWMMIGFIHGVMNTDNCSIAGETIDYGPCAFMDTFDPKTVFSSIDHMGRYAFGNQPPIALWNLTRLAECLVPLLSADEDKGVEIAQTVLGGFAERFNATYLAGLAAKLGLFTTQADDAQLSQDFLAAMAKGRADFTLTFRRLSDAAIDPTELGTVRALFDDPAAFDDWAPRWRQRVTAEPQDGAARQAAMRAVNPAYIPRNHRVEAAIRAAVDKDDFGPFHELLTVLTNPFREQPEFDRYADPPQPHERVLETFCGT.

Positions 88, 90, 91, 111, 123, 124, 174, and 181 each coordinate ATP. D250 (proton acceptor) is an active-site residue. Mg(2+) contacts are provided by N251 and D260. D260 lines the ATP pocket.

It belongs to the SELO family. Mg(2+) is required as a cofactor. Requires Mn(2+) as cofactor.

It catalyses the reaction L-seryl-[protein] + ATP = 3-O-(5'-adenylyl)-L-seryl-[protein] + diphosphate. The catalysed reaction is L-threonyl-[protein] + ATP = 3-O-(5'-adenylyl)-L-threonyl-[protein] + diphosphate. The enzyme catalyses L-tyrosyl-[protein] + ATP = O-(5'-adenylyl)-L-tyrosyl-[protein] + diphosphate. It carries out the reaction L-histidyl-[protein] + UTP = N(tele)-(5'-uridylyl)-L-histidyl-[protein] + diphosphate. It catalyses the reaction L-seryl-[protein] + UTP = O-(5'-uridylyl)-L-seryl-[protein] + diphosphate. The catalysed reaction is L-tyrosyl-[protein] + UTP = O-(5'-uridylyl)-L-tyrosyl-[protein] + diphosphate. Functionally, nucleotidyltransferase involved in the post-translational modification of proteins. It can catalyze the addition of adenosine monophosphate (AMP) or uridine monophosphate (UMP) to a protein, resulting in modifications known as AMPylation and UMPylation. This chain is Protein nucleotidyltransferase YdiU, found in Rhodopseudomonas palustris (strain BisB5).